The sequence spans 103 residues: uncharacterized protein (103 aa).

The segment at 1 to 103 is disordered; that stretch reads MAGARRRARC…WRGGSCTSQR (103 aa). Composition is skewed to basic residues over residues 55-65 and 74-84; these read RRPGPGRRARS and RPPHSRTRARR.

The protein belongs to the epstein-barr virus RPMS1 family.

This is an uncharacterized protein from Epstein-Barr virus (strain GD1) (HHV-4).